The sequence spans 1003 residues: UPF0182 protein Mkms_1433 (1003 aa).

A run of 7 helical transmembrane segments spans residues 18–38, 63–83, 114–134, 176–196, 211–231, 260–280, and 288–308; these read VLIG…RFID, VVVF…GLAL, LFGF…AQSY, FVAT…FGGI, IQLV…YWLD, KLIL…AIVL, and IGVV…PLVV. The span at 902–937 shows a compositional bias: low complexity; that stretch reads ATGPAPANLPDGQPAAQPPNGQQPAAQTPGNQAGRA. Positions 902–979 are disordered; it reads ATGPAPANLP…MSGLQDAQRS (78 aa).

The protein belongs to the UPF0182 family.

The protein localises to the cell membrane. This chain is UPF0182 protein Mkms_1433, found in Mycobacterium sp. (strain KMS).